A 333-amino-acid chain; its full sequence is NADH-quinone oxidoreductase subunit H (333 aa).

Helical transmembrane passes span 15-35 (FFIF…FVTY), 88-108 (FILA…VIPF), 117-137 (IGVG…GVVT), 159-179 (ISYE…AGSL), 191-211 (VWYI…AVAE), 239-259 (WAFF…LITV), 274-296 (IPGA…WFRV), and 313-333 (VLLP…ELFF).

This sequence belongs to the complex I subunit 1 family. NDH-1 is composed of 14 different subunits. Subunits NuoA, H, J, K, L, M, N constitute the membrane sector of the complex.

It is found in the cell membrane. It catalyses the reaction a quinone + NADH + 5 H(+)(in) = a quinol + NAD(+) + 4 H(+)(out). Functionally, NDH-1 shuttles electrons from NADH, via FMN and iron-sulfur (Fe-S) centers, to quinones in the respiratory chain. The immediate electron acceptor for the enzyme in this species is believed to be ubiquinone. Couples the redox reaction to proton translocation (for every two electrons transferred, four hydrogen ions are translocated across the cytoplasmic membrane), and thus conserves the redox energy in a proton gradient. This subunit may bind ubiquinone. This is NADH-quinone oxidoreductase subunit H from Bacillus anthracis (strain A0248).